The sequence spans 292 residues: Phosphoribulokinase, plasmid (292 aa).

12–20 contacts ATP; that stretch reads GSSGAGTTS.

Belongs to the phosphoribulokinase family. Homooctamer.

It carries out the reaction D-ribulose 5-phosphate + ATP = D-ribulose 1,5-bisphosphate + ADP + H(+). It functions in the pathway carbohydrate biosynthesis; Calvin cycle. This is Phosphoribulokinase, plasmid (cfxP) from Cupriavidus necator (strain ATCC 17699 / DSM 428 / KCTC 22496 / NCIMB 10442 / H16 / Stanier 337) (Ralstonia eutropha).